We begin with the raw amino-acid sequence, 246 residues long: Octanoyltransferase (246 aa).

The region spanning 50–231 (PDTDDEIWVV…RLIAHLDGAT (182 aa)) is the BPL/LPL catalytic domain. Residues 90-97 (RGGQITYH), 162-164 (ALG), and 175-177 (GLS) each bind substrate. The active-site Acyl-thioester intermediate is the cysteine 193.

This sequence belongs to the LipB family.

Its subcellular location is the cytoplasm. The catalysed reaction is octanoyl-[ACP] + L-lysyl-[protein] = N(6)-octanoyl-L-lysyl-[protein] + holo-[ACP] + H(+). The protein operates within protein modification; protein lipoylation via endogenous pathway; protein N(6)-(lipoyl)lysine from octanoyl-[acyl-carrier-protein]: step 1/2. In terms of biological role, catalyzes the transfer of endogenously produced octanoic acid from octanoyl-acyl-carrier-protein onto the lipoyl domains of lipoate-dependent enzymes. Lipoyl-ACP can also act as a substrate although octanoyl-ACP is likely to be the physiological substrate. The polypeptide is Octanoyltransferase (Burkholderia pseudomallei (strain 1106a)).